We begin with the raw amino-acid sequence, 1083 residues long: Glutamate receptor-interacting protein 2 (1083 aa).

3 PDZ domains span residues 58-141 (IVEL…EYEL), 156-244 (TIEI…EYDV), and 258-342 (LVEI…LPAH). Over residues 408-422 (AGTPGFSSQNSNTLP) the composition is skewed to polar residues. The segment at 408-460 (AGTPGFSSQNSNTLPRTVHPMSPRTTMNRRRQKRKDHKSSLSLASSTVGPGGQ) is disordered. Positions 434 to 444 (MNRRRQKRKDH) are enriched in basic residues. 3 consecutive PDZ domains span residues 468–555 (EIIL…EIEF), 569–652 (HVKL…RKDE), and 667–749 (TVEL…KKQT). 3 disordered regions span residues 754 to 783 (PQRL…LSEI), 853 to 872 (NEQD…GLET), and 936 to 965 (GSHH…VHNA). A compositionally biased stretch (polar residues) spans 774-783 (SQKTSKLSEI). Residues 945-963 (PKKENKLSQDARSKKEEVH) show a composition bias toward basic and acidic residues. The region spanning 974–1056 (KVTVQKDMDT…RLDLVISRGL (83 aa)) is the PDZ 7 domain.

Belongs to the GRIP2 family. Enriched in the mitochondrial cloud of stage I oocytes, before becoming concentrated at the tip of the vegetal cortex in stage II oocytes. Expression becomes localized to the germ plasm of stage III-IV oocytes and early cleavage stages. At the tailbud stage, localizes to the migrating primordial germ cells (PGCs) until PGC migration is complete (stage 40), at which point expression disappears. In the adult, expressed in the brain, ovary, eye, muscle, spinal cord and very weakly in adipocytes.

The protein localises to the cytoplasm. Its function is as follows. Plays an important role in primordial germ cell (PGC) maintenance and efficiency of PGC migration. This chain is Glutamate receptor-interacting protein 2, found in Xenopus laevis (African clawed frog).